Reading from the N-terminus, the 167-residue chain is Crossover junction endodeoxyribonuclease RuvC (167 aa).

Active-site residues include Asp8, Glu68, and Asp140. Positions 8, 68, and 140 each coordinate Mg(2+).

This sequence belongs to the RuvC family. Homodimer which binds Holliday junction (HJ) DNA. The HJ becomes 2-fold symmetrical on binding to RuvC with unstacked arms; it has a different conformation from HJ DNA in complex with RuvA. In the full resolvosome a probable DNA-RuvA(4)-RuvB(12)-RuvC(2) complex forms which resolves the HJ. It depends on Mg(2+) as a cofactor.

The protein localises to the cytoplasm. The enzyme catalyses Endonucleolytic cleavage at a junction such as a reciprocal single-stranded crossover between two homologous DNA duplexes (Holliday junction).. Its function is as follows. The RuvA-RuvB-RuvC complex processes Holliday junction (HJ) DNA during genetic recombination and DNA repair. Endonuclease that resolves HJ intermediates. Cleaves cruciform DNA by making single-stranded nicks across the HJ at symmetrical positions within the homologous arms, yielding a 5'-phosphate and a 3'-hydroxyl group; requires a central core of homology in the junction. The consensus cleavage sequence is 5'-(A/T)TT(C/G)-3'. Cleavage occurs on the 3'-side of the TT dinucleotide at the point of strand exchange. HJ branch migration catalyzed by RuvA-RuvB allows RuvC to scan DNA until it finds its consensus sequence, where it cleaves and resolves the cruciform DNA. The polypeptide is Crossover junction endodeoxyribonuclease RuvC (Sinorhizobium medicae (strain WSM419) (Ensifer medicae)).